The sequence spans 148 residues: Large ribosomal subunit protein bL9 (148 aa).

The protein belongs to the bacterial ribosomal protein bL9 family.

Functionally, binds to the 23S rRNA. The protein is Large ribosomal subunit protein bL9 of Finegoldia magna (strain ATCC 29328 / DSM 20472 / WAL 2508) (Peptostreptococcus magnus).